Here is a 140-residue protein sequence, read N- to C-terminus: MTKQRTLSIIKPDAVEKNVIGEIYSRFEKAGLRIIAAKMKHLSKAEAEGFYAVHKDRPFFSALVEFMISGPVIIQVLEGENAIAKNRELMGATNPKEAKAGTIRADFADSIDANAVHGSDAEDTAAQEIRYFFSDTEIFG.

Lys-11, Phe-59, Arg-87, Thr-93, Arg-104, and Asn-114 together coordinate ATP. His-117 acts as the Pros-phosphohistidine intermediate in catalysis.

This sequence belongs to the NDK family. In terms of assembly, homotetramer. The cofactor is Mg(2+).

Its subcellular location is the cytoplasm. The enzyme catalyses a 2'-deoxyribonucleoside 5'-diphosphate + ATP = a 2'-deoxyribonucleoside 5'-triphosphate + ADP. It catalyses the reaction a ribonucleoside 5'-diphosphate + ATP = a ribonucleoside 5'-triphosphate + ADP. Major role in the synthesis of nucleoside triphosphates other than ATP. The ATP gamma phosphate is transferred to the NDP beta phosphate via a ping-pong mechanism, using a phosphorylated active-site intermediate. This Francisella tularensis subsp. mediasiatica (strain FSC147) protein is Nucleoside diphosphate kinase.